Consider the following 434-residue polypeptide: Methylenetetrahydrofolate--tRNA-(uracil-5-)-methyltransferase TrmFO (434 aa).

8–13 contributes to the FAD binding site; that stretch reads GAGLAG.

It belongs to the MnmG family. TrmFO subfamily. FAD is required as a cofactor.

The protein localises to the cytoplasm. It carries out the reaction uridine(54) in tRNA + (6R)-5,10-methylene-5,6,7,8-tetrahydrofolate + NADH + H(+) = 5-methyluridine(54) in tRNA + (6S)-5,6,7,8-tetrahydrofolate + NAD(+). The catalysed reaction is uridine(54) in tRNA + (6R)-5,10-methylene-5,6,7,8-tetrahydrofolate + NADPH + H(+) = 5-methyluridine(54) in tRNA + (6S)-5,6,7,8-tetrahydrofolate + NADP(+). Its function is as follows. Catalyzes the folate-dependent formation of 5-methyl-uridine at position 54 (M-5-U54) in all tRNAs. This Exiguobacterium sibiricum (strain DSM 17290 / CCUG 55495 / CIP 109462 / JCM 13490 / 255-15) protein is Methylenetetrahydrofolate--tRNA-(uracil-5-)-methyltransferase TrmFO.